The sequence spans 182 residues: MELELGLAPPNSGHLVVDELSSSSSSGGGSGSAPVSASSAGKRGFREAFQETLLLFDDGSCCNTSDDDCRRRKKTVVGWPPVSSARRACGGANYVKVKKEGDAIGRKVDLALHSSYDELAATLARMFPTNDHQGEKKMANDDHGDAAGPVVTYEDGDGDWMLVGDVPWDDFARSVKRLKILG.

Positions 1 to 41 are disordered; sequence MELELGLAPPNSGHLVVDELSSSSSSGGGSGSAPVSASSAG. An EAR-like (transcriptional repression) motif is present at residues 3 to 7; that stretch reads LELGL. Over residues 32-41 the composition is skewed to low complexity; sequence SAPVSASSAG. The PB1 domain maps to 92 to 182; sequence ANYVKVKKEG…RSVKRLKILG (91 aa).

The protein belongs to the Aux/IAA family. As to quaternary structure, homodimers and heterodimers. In terms of tissue distribution, expressed in etiolated shoots and flowers.

It localises to the nucleus. In terms of biological role, aux/IAA proteins are short-lived transcriptional factors that function as repressors of early auxin response genes at low auxin concentrations. The chain is Auxin-responsive protein IAA9 (IAA9) from Oryza sativa subsp. japonica (Rice).